We begin with the raw amino-acid sequence, 95 residues long: Small ubiquitin-related modifier 2-B (95 aa).

Lys-11 participates in a covalent cross-link: Glycyl lysine isopeptide (Lys-Gly) (interchain with G-Cter in SUMO). Positions 16-95 (DHINLKVAGQ…VFQQQTGGSY (80 aa)) constitute a Ubiquitin-like domain. Residue Gly-93 forms a Glycyl lysine isopeptide (Gly-Lys) (interchain with K-? in acceptor proteins) linkage. A propeptide spanning residues 94–95 (SY) is cleaved from the precursor.

It belongs to the ubiquitin family. SUMO subfamily. In terms of assembly, interacts with sae2 and ube2i. Covalently attached to a number of proteins, including top2. Post-translationally, polymeric chains can be formed through Lys-11 cross-linking. Cleavage of precursor form by a sentrin-specific protease is necessary for function.

The protein resides in the nucleus. Ubiquitin-like protein that can be covalently attached to proteins as a monomer or as a lysine-linked polymer. Covalent attachment via an isopeptide bond to its substrates requires prior activation by the E1 complex sae1-sae2 and linkage to the E2 enzyme ube2i, and can be promoted by an E3 ligase such as pias1-4. This post-translational modification on lysine residues of proteins plays a crucial role in a number of cellular processes such as nuclear transport, DNA replication and repair, mitosis and signal transduction. Polymeric sumo2 chains are also susceptible to polyubiquitination which functions as a signal for proteasomal degradation of modified proteins. This Xenopus laevis (African clawed frog) protein is Small ubiquitin-related modifier 2-B (sumo2-b).